Reading from the N-terminus, the 351-residue chain is Dihydroorotate dehydrogenase (quinone) (351 aa).

Residues 67–71 and Thr91 contribute to the FMN site; that span reads AGFDK. Lys71 is a binding site for substrate. 116–120 is a substrate binding site; the sequence is NAMGF. The FMN site is built by Asn145 and Asn178. Asn178 lines the substrate pocket. Ser181 serves as the catalytic Nucleophile. A substrate-binding site is contributed by Asn183. FMN is bound by residues Lys214 and Thr242. 243–244 lines the substrate pocket; sequence NT. Residues Gly262, Gly291, and 312-313 each bind FMN; that span reads YT.

This sequence belongs to the dihydroorotate dehydrogenase family. Type 2 subfamily. As to quaternary structure, monomer. FMN serves as cofactor.

The protein resides in the cell membrane. It carries out the reaction (S)-dihydroorotate + a quinone = orotate + a quinol. Its pathway is pyrimidine metabolism; UMP biosynthesis via de novo pathway; orotate from (S)-dihydroorotate (quinone route): step 1/1. In terms of biological role, catalyzes the conversion of dihydroorotate to orotate with quinone as electron acceptor. The sequence is that of Dihydroorotate dehydrogenase (quinone) from Nitratiruptor sp. (strain SB155-2).